The primary structure comprises 101 residues: Small ribosomal subunit protein uS14 (101 aa).

The protein belongs to the universal ribosomal protein uS14 family. As to quaternary structure, part of the 30S ribosomal subunit. Contacts proteins S3 and S10.

In terms of biological role, binds 16S rRNA, required for the assembly of 30S particles and may also be responsible for determining the conformation of the 16S rRNA at the A site. This is Small ribosomal subunit protein uS14 from Proteus mirabilis (strain HI4320).